A 946-amino-acid polypeptide reads, in one-letter code: Bifunctional glutamine synthetase adenylyltransferase/adenylyl-removing enzyme (946 aa).

The tract at residues 1 to 440 (MKPLSSPLQQ…VFNELIGDDE (440 aa)) is adenylyl removase. An adenylyl transferase region spans residues 449 to 946 (SEQWRELWQD…ASWQKWLVEE (498 aa)).

The protein belongs to the GlnE family. It depends on Mg(2+) as a cofactor.

It catalyses the reaction [glutamine synthetase]-O(4)-(5'-adenylyl)-L-tyrosine + phosphate = [glutamine synthetase]-L-tyrosine + ADP. It carries out the reaction [glutamine synthetase]-L-tyrosine + ATP = [glutamine synthetase]-O(4)-(5'-adenylyl)-L-tyrosine + diphosphate. In terms of biological role, involved in the regulation of glutamine synthetase GlnA, a key enzyme in the process to assimilate ammonia. When cellular nitrogen levels are high, the C-terminal adenylyl transferase (AT) inactivates GlnA by covalent transfer of an adenylyl group from ATP to specific tyrosine residue of GlnA, thus reducing its activity. Conversely, when nitrogen levels are low, the N-terminal adenylyl removase (AR) activates GlnA by removing the adenylyl group by phosphorolysis, increasing its activity. The regulatory region of GlnE binds the signal transduction protein PII (GlnB) which indicates the nitrogen status of the cell. In Escherichia coli O6:H1 (strain CFT073 / ATCC 700928 / UPEC), this protein is Bifunctional glutamine synthetase adenylyltransferase/adenylyl-removing enzyme.